A 110-amino-acid chain; its full sequence is MSLSEARFHDLVDATQQAVEDIFDDSGLDVDLENSAGVLTVRFDNGSQLIFSRQEPIRQLWLAARSGGYHFDYDEAEGRWICDSSDEQLGEMLVRITLEQSGAELEFDEL.

This sequence belongs to the frataxin family.

Involved in iron-sulfur (Fe-S) cluster assembly. May act as a regulator of Fe-S biogenesis. The polypeptide is Iron-sulfur cluster assembly protein CyaY (Ectopseudomonas mendocina (strain ymp) (Pseudomonas mendocina)).